A 32-amino-acid polypeptide reads, in one-letter code: Photosystem I reaction center subunit XII (32 aa).

A helical membrane pass occupies residues 4–26 (ISDSQIIVILLSVFITSILALRL).

Belongs to the PsaM family.

It localises to the plastid. It is found in the chloroplast thylakoid membrane. This is Photosystem I reaction center subunit XII from Marchantia polymorpha (Common liverwort).